The sequence spans 445 residues: 4-hydroxyphenylpyruvate dioxygenase (445 aa).

Positions 1-11 (MGHQNAAVSEN) are enriched in polar residues. The interval 1–20 (MGHQNAAVSENQNHDDGAAS) is disordered. VOC domains follow at residues 46–192 (RFHH…YVSY) and 223–383 (RLDH…IFTK). Positions 226, 308, and 394 each coordinate Fe cation.

This sequence belongs to the 4HPPD family. In terms of assembly, homodimer. Fe cation serves as cofactor.

It localises to the cytoplasm. It carries out the reaction 3-(4-hydroxyphenyl)pyruvate + O2 = homogentisate + CO2. It functions in the pathway amino-acid degradation; L-phenylalanine degradation; acetoacetate and fumarate from L-phenylalanine: step 3/6. It participates in cofactor biosynthesis; prenylquinone biosynthesis. Catalyzes the conversion of 4-hydroxyphenylpyruvic acid to homogentisic acid, one of the steps in tyrosine catabolism. This is 4-hydroxyphenylpyruvate dioxygenase (HPD) from Arabidopsis thaliana (Mouse-ear cress).